Consider the following 284-residue polypeptide: 2-dehydro-3-deoxyphosphooctonate aldolase (284 aa).

Belongs to the KdsA family.

The protein resides in the cytoplasm. It catalyses the reaction D-arabinose 5-phosphate + phosphoenolpyruvate + H2O = 3-deoxy-alpha-D-manno-2-octulosonate-8-phosphate + phosphate. Its pathway is carbohydrate biosynthesis; 3-deoxy-D-manno-octulosonate biosynthesis; 3-deoxy-D-manno-octulosonate from D-ribulose 5-phosphate: step 2/3. It functions in the pathway bacterial outer membrane biogenesis; lipopolysaccharide biosynthesis. The polypeptide is 2-dehydro-3-deoxyphosphooctonate aldolase (Aliivibrio salmonicida (strain LFI1238) (Vibrio salmonicida (strain LFI1238))).